Here is a 172-residue protein sequence, read N- to C-terminus: Small ribosomal subunit protein uS4 (172 aa).

One can recognise an S4 RNA-binding domain in the interval 104–168 (RRLQTIVYRK…SPLAKMAQGG (65 aa)).

It belongs to the universal ribosomal protein uS4 family. In terms of assembly, part of the 30S ribosomal subunit. Contacts protein S5. The interaction surface between S4 and S5 is involved in control of translational fidelity.

In terms of biological role, one of the primary rRNA binding proteins, it binds directly to 16S rRNA where it nucleates assembly of the body of the 30S subunit. With S5 and S12 plays an important role in translational accuracy. In Thermofilum pendens (strain DSM 2475 / Hrk 5), this protein is Small ribosomal subunit protein uS4.